Consider the following 211-residue polypeptide: 3-demethoxyubiquinol 3-hydroxylase (211 aa).

Residues Glu-60, Glu-90, His-93, Glu-142, Glu-174, and His-177 each coordinate Fe cation.

This sequence belongs to the COQ7 family. Fe cation serves as cofactor.

The protein localises to the cell membrane. The catalysed reaction is a 5-methoxy-2-methyl-3-(all-trans-polyprenyl)benzene-1,4-diol + AH2 + O2 = a 3-demethylubiquinol + A + H2O. The protein operates within cofactor biosynthesis; ubiquinone biosynthesis. Its function is as follows. Catalyzes the hydroxylation of 2-nonaprenyl-3-methyl-6-methoxy-1,4-benzoquinol during ubiquinone biosynthesis. The protein is 3-demethoxyubiquinol 3-hydroxylase of Herminiimonas arsenicoxydans.